A 468-amino-acid polypeptide reads, in one-letter code: MFNSIGVIGLGVMGSNIALNMANKGENVAVYNYTRDLTDQLIQKLDGQSLSPYYELEDFVQSLEKPRKIFLMVTAGKPVDSVIQSLKPLLEEGDVIMDGGNSHYEDTERRYDELKEKGIGYLGVGISGGEVGALTGPSIMPGGDRDVYEKAAPILTKIAAQVGDDPCCVYIGPKGAGHFTKMVHNGIEYADMQLIAEAYTFLRETLRLPLDEIASIFETWNQGELKSYLIEITAEILRKKDEKTGQPLIDVILDKTGQKGTGKWTSMQAIDNGIPSTIITESLFARYLSSLKEERMAAQDVLAGPEAEEKHLDKDTWIEYVRQALYMGKVCAYAQGFAQYKMSSELYGWNLPLKDIALIFRGGCIIRADFLNVISEAFSEQPNLANLLIAPYFTDKLHAYQTGLRKVVCEGISTGISFPCLTTALSYYDGYRTGRSNANLLQAQRDYFGAHTYERTDMDGVFHTNWSE.

NAD(+) contacts are provided by residues 9 to 14, 32 to 34, 73 to 75, and Asn-101; these read GLGVMG, NYT, and VTA. Substrate-binding positions include Asn-101 and 127 to 129; that span reads SGG. Lys-181 serves as the catalytic Proton acceptor. 184–185 is a binding site for substrate; the sequence is HN. Glu-188 functions as the Proton donor in the catalytic mechanism. 5 residues coordinate substrate: Tyr-189, Lys-259, Arg-286, Arg-445, and His-451.

The protein belongs to the 6-phosphogluconate dehydrogenase family. Homodimer.

It catalyses the reaction 6-phospho-D-gluconate + NAD(+) = D-ribulose 5-phosphate + CO2 + NADH. Its function is as follows. Catalyzes the oxidative decarboxylation of 6-phosphogluconate to ribulose 5-phosphate and CO(2), with concomitant reduction of NAD to NADH. Does not contribute to oxidative pentose phosphate (PP) pathway fluxes during growth on glucose. The functional role of GntZ remains obscure. This Bacillus subtilis (strain 168) protein is 6-phosphogluconate dehydrogenase, NAD(+)-dependent, decarboxylating (gntZ).